The sequence spans 201 residues: Protein TV1384 (201 aa).

The AMMECR1 domain maps to 11–200; sequence DIGAKAVMLA…EIEPNGKVEQ (190 aa).

The sequence is that of Protein TV1384 from Thermoplasma volcanium (strain ATCC 51530 / DSM 4299 / JCM 9571 / NBRC 15438 / GSS1).